Here is a 309-residue protein sequence, read N- to C-terminus: HPr kinase/phosphorylase (309 aa).

Catalysis depends on residues His-138 and Lys-159. 153 to 160 is an ATP binding site; it reads GQSGVGKS. Position 160 (Ser-160) interacts with Mg(2+). Residue Asp-177 is the Proton acceptor; for phosphorylation activity. Proton donor; for dephosphorylation activity of the active site. An important for the catalytic mechanism of both phosphorylation and dephosphorylation region spans residues 201–210; that stretch reads LEIRGLGIIN. A Mg(2+)-binding site is contributed by Glu-202. Residue Arg-243 is part of the active site. The interval 264 to 269 is important for the catalytic mechanism of dephosphorylation; that stretch reads PVRPGR.

It belongs to the HPrK/P family. As to quaternary structure, homohexamer. It depends on Mg(2+) as a cofactor.

It carries out the reaction [HPr protein]-L-serine + ATP = [HPr protein]-O-phospho-L-serine + ADP + H(+). The catalysed reaction is [HPr protein]-O-phospho-L-serine + phosphate + H(+) = [HPr protein]-L-serine + diphosphate. Catalyzes the ATP- as well as the pyrophosphate-dependent phosphorylation of a specific serine residue in HPr, a phosphocarrier protein of the phosphoenolpyruvate-dependent sugar phosphotransferase system (PTS). HprK/P also catalyzes the pyrophosphate-producing, inorganic phosphate-dependent dephosphorylation (phosphorolysis) of seryl-phosphorylated HPr (P-Ser-HPr). The two antagonistic activities of HprK/P are regulated by several intracellular metabolites, which change their concentration in response to the absence or presence of rapidly metabolisable carbon sources (glucose, fructose, etc.) in the growth medium. Also phosphorylates/dephosphorylates the HPr-like catabolite repression protein crh on a specific serine residue. Therefore, by controlling the phosphorylation state of HPr and crh, HPrK/P is a sensor enzyme that plays a major role in the regulation of carbon metabolism and sugar transport: it mediates carbon catabolite repression (CCR), and regulates PTS-catalyzed carbohydrate uptake and inducer exclusion. The polypeptide is HPr kinase/phosphorylase (Bacillus cereus (strain B4264)).